We begin with the raw amino-acid sequence, 365 residues long: Class I histocompatibility antigen, Gogo-A*0101 alpha chain (365 aa).

Residues 1 to 24 (MAVMAPRTLVLLLSGALALTQTWA) form the signal peptide. The segment at 25–114 (GSHSMRYFST…LRGYYNQSED (90 aa)) is alpha-1. The Extracellular portion of the chain corresponds to 25 to 308 (GSHSMRYFST…EPSSQPTIPI (284 aa)). Residue Asn-110 is glycosylated (N-linked (GlcNAc...) asparagine). Residues 115–206 (GSHTIQRMYG…ENGKETLQRT (92 aa)) form an alpha-2 region. 2 disulfide bridges follow: Cys-125/Cys-188 and Cys-227/Cys-283. Residues 207–298 (DAPKTHMTHH…GLPEPLTLRW (92 aa)) form an alpha-3 region. In terms of domain architecture, Ig-like C1-type spans 209–297 (PKTHMTHHAV…EGLPEPLTLR (89 aa)). The tract at residues 299 to 308 (EPSSQPTIPI) is connecting peptide. Residues 309–332 (VGIIAGLVLFGAVIAGAVVAAVRW) form a helical membrane-spanning segment. The Cytoplasmic segment spans residues 333–365 (RRKSSDRKGGSYSQAASSDSAQGSDVSLTACKV). Positions 338–365 (DRKGGSYSQAASSDSAQGSDVSLTACKV) are disordered. Residues 342–359 (GSYSQAASSDSAQGSDVS) are compositionally biased toward low complexity. Ser-343 is modified (phosphoserine). A Phosphotyrosine modification is found at Tyr-344. Ser-345, Ser-349, Ser-350, Ser-352, Ser-356, and Ser-359 each carry phosphoserine.

It belongs to the MHC class I family. Heterodimer of an alpha chain and a beta chain (beta-2-microglobulin).

It localises to the membrane. Its function is as follows. Involved in the presentation of foreign antigens to the immune system. The protein is Class I histocompatibility antigen, Gogo-A*0101 alpha chain of Gorilla gorilla gorilla (Western lowland gorilla).